The following is a 496-amino-acid chain: Probable G-protein coupled receptor Mth-like 5 (496 aa).

Topologically, residues 1-219 are extracellular; it reads MLVKTLGAHF…SNFLLRKILN (219 aa). N82 carries N-linked (GlcNAc...) asparagine glycosylation. Residues 220–240 form a helical membrane-spanning segment; the sequence is PIFHGISLVILLVIAIIYFIL. Residues 241 to 246 are Cytoplasmic-facing; sequence PTLRDL. A helical transmembrane segment spans residues 247–267; it reads VGNIVTTIAMCLMVSQAADLV. Over 268–276 the chain is Extracellular; the sequence is RIFTELTSH. Residues 277 to 297 form a helical membrane-spanning segment; the sequence is VSFIVADIILCFSLLAAFFWL. Topologically, residues 298-327 are cytoplasmic; sequence NSFGFYIWKTFRSRNVFLRVTDGRKYCYYS. Residues 328-348 traverse the membrane as a helical segment; that stretch reads AYAWGCTATMAALAVFAHFFL. Residues 349 to 366 are Extracellular-facing; that stretch reads DAESYKQEHMVGEQETIG. The chain crosses the membrane as a helical span at residues 367 to 387; sequence WLGICIFFAPIACTILVNIFF. Topologically, residues 388 to 411 are cytoplasmic; sequence YVTTRKLINRRTVYGRIAHKLKAN. A helical transmembrane segment spans residues 412–432; the sequence is FIMFSLMLLVMSIAWLFLIMS. Topologically, residues 433 to 438 are extracellular; the sequence is WLQMEG. The helical transmembrane segment at 439-459 threads the bilayer; sequence LLYAHIVVNALQTPLLLYICV. The Cytoplasmic portion of the chain corresponds to 460–496; that stretch reads LRQRHVTFLLKKTCCYNEPPSANDWGDELHYMNGNDY.

It belongs to the G-protein coupled receptor 2 family. Mth subfamily.

It localises to the cell membrane. This chain is Probable G-protein coupled receptor Mth-like 5 (mthl5), found in Drosophila melanogaster (Fruit fly).